A 556-amino-acid chain; its full sequence is MSMFCYQCSETLNGKACTVAGVCGKDPETSNLLDLLVWVLKGISFWATEARKLGVDDPEVNLFVAEGLFTTITNVNFDPESIGKKIEKAFALRERIMKATKEAYKEQYGKEFSKEVPEAATWYVPGDLSVWELKGAEVGALSTKDEDIRSLRELLTYGLKGIAAYTDHAYILQKFNDEILHFLQEGLAATLDDSLTVNDYVALVMKAGEFAVKAMQLLDEANTSRYGNPEITEVYTGTLPGPAILVSGHDLLDLEEILKQTEGKGINVYTHGEMLPAHAYPELKKYKHLVGNYGTSWYNQQKEFAQFNGAIVMTTNCIQKPLESYKDRIFTTGLVGWPGVKHIPNRTDGGQKDFTPVIEKALELGGLEEKPGKKIVIGFAHEQTAQVADKIIEAVKAGKIKRFVVMAGCDGRAKEREYYTEMAKRLPKETVILTAGCAKYRYNMLDLGDIDGIPRVIDAGQCNDSYSLVVTALRLKEAFGLDDINDLPISYDIAWYEQKAVAVLLALLYLGVKGIRLGPVLPAFLSPNVLKVLVENFDIKPISTVEQDLELILQGK.

4 residues coordinate [4Fe-4S] cluster: C5, C8, C17, and C23. Hybrid [4Fe-2O-2S] cluster is bound by residues H249, E273, C317, C409, C437, C462, E497, and K499. C409 carries the cysteine persulfide modification.

Belongs to the HCP family. [4Fe-4S] cluster serves as cofactor. Hybrid [4Fe-2O-2S] cluster is required as a cofactor.

It localises to the cytoplasm. The enzyme catalyses A + NH4(+) + H2O = hydroxylamine + AH2 + H(+). In terms of biological role, catalyzes the reduction of hydroxylamine to form NH(3) and H(2)O. The protein is Hydroxylamine reductase of Kosmotoga olearia (strain ATCC BAA-1733 / DSM 21960 / TBF 19.5.1).